We begin with the raw amino-acid sequence, 113 residues long: Small ribosomal subunit protein eS24 (113 aa).

Belongs to the eukaryotic ribosomal protein eS24 family.

The polypeptide is Small ribosomal subunit protein eS24 (Metallosphaera sedula (strain ATCC 51363 / DSM 5348 / JCM 9185 / NBRC 15509 / TH2)).